A 771-amino-acid polypeptide reads, in one-letter code: Kojibiose phosphorylase (771 aa).

Position 358–359 (358–359 (WD)) interacts with substrate. E498 functions as the Proton donor in the catalytic mechanism. 611-612 (KQ) is a substrate binding site.

The protein belongs to the glycosyl hydrolase 65 family.

It carries out the reaction kojibiose + phosphate = beta-D-glucose 1-phosphate + D-glucose. Functionally, catalyzes the reversible phosphorolysis of kojibiose into beta-D-glucose 1-phosphate (Glc1P) and D-glucose. This chain is Kojibiose phosphorylase (kojP), found in Caldanaerobacter subterraneus subsp. tengcongensis (strain DSM 15242 / JCM 11007 / NBRC 100824 / MB4) (Thermoanaerobacter tengcongensis).